Consider the following 215-residue polypeptide: MHDPRGFPIHPQPYHLHPTAGGLGEGRMRGGGRRRPGAKLSTDPQSVAARERRHRISDRFRVLRSLVPGGSKMDTVSMLEQAIHYVKFLKAQVTLHQAALVQHEEGCQHADVAAAFSAADADLALELNHRHGGAGDDDAGMTTLEMAPMQEAVGYGDGPAHQMMQQALDPAGQLMMGGAHQLPPLPCCVFVQETDPSCYSVCNVHGEESGAQGSY.

Residues 1 to 48 (MHDPRGFPIHPQPYHLHPTAGGLGEGRMRGGGRRRPGAKLSTDPQSVA) are disordered. The basic motif; degenerate stretch occupies residues 40–53 (LSTDPQSVAARERR). The bHLH domain occupies 40–89 (LSTDPQSVAARERRHRISDRFRVLRSLVPGGSKMDTVSMLEQAIHYVKFL). Positions 54–89 (HRISDRFRVLRSLVPGGSKMDTVSMLEQAIHYVKFL) are helix-loop-helix motif.

This sequence belongs to the bHLH protein family. As to quaternary structure, efficient DNA binding requires dimerization with another bHLH protein. Interacts with LAX2. Expressed in the boundary between the shoot apical meristem (SAM) and the region of new meristem formation.

It is found in the nucleus. Its function is as follows. Transcription factor that seems to regulate organogenesis in postembryonic development. Involved in the regulation of shoot branching by controlling axillary meristem initiation. Functions in association with LAX2 to regulate the process of AM formation. Possesses transactivation activity in yeast. The sequence is that of Transcription factor LAX PANICLE 1 from Oryza sativa subsp. japonica (Rice).